The following is a 573-amino-acid chain: Membrane protein insertase YidC (573 aa).

A helical membrane pass occupies residues 6–26; sequence VFLIFAWLMVAALLWMEWGKD. Residues 63-82 are disordered; that stretch reads PQAGSPAAVPATSTTTATPA. 5 helical membrane passes run 355-375, 379-399, 446-466, 488-508, and 524-544; these read FSIM…LHSF, WGWA…PLSA, GGCL…WVLV, PYFI…KLTP, and PLVF…YWVV.

The protein belongs to the OXA1/ALB3/YidC family. Type 1 subfamily. As to quaternary structure, interacts with the Sec translocase complex via SecD. Specifically interacts with transmembrane segments of nascent integral membrane proteins during membrane integration.

Its subcellular location is the cell inner membrane. Required for the insertion and/or proper folding and/or complex formation of integral membrane proteins into the membrane. Involved in integration of membrane proteins that insert both dependently and independently of the Sec translocase complex, as well as at least some lipoproteins. Aids folding of multispanning membrane proteins. The chain is Membrane protein insertase YidC from Xanthomonas campestris pv. campestris (strain 8004).